The primary structure comprises 275 residues: Large ribosomal subunit protein uL2c (275 aa).

The disordered stretch occupies residues 219-254 (TVRGSVMNPCDHPHGGGEGRAPIGRTRPLTPWGKPA).

Belongs to the universal ribosomal protein uL2 family. As to quaternary structure, part of the 50S ribosomal subunit.

It localises to the plastid. Its subcellular location is the chloroplast. This Phaeodactylum tricornutum (strain CCAP 1055/1) protein is Large ribosomal subunit protein uL2c (rpl2).